A 280-amino-acid polypeptide reads, in one-letter code: Putative ABC transporter ATP-binding protein MTH_133 (280 aa).

An ABC transporter domain is found at I6 to R241. G39–S46 lines the ATP pocket.

The protein belongs to the ABC transporter superfamily.

The protein localises to the cell membrane. Probably part of an ABC transporter complex. Responsible for energy coupling to the transport system. This is Putative ABC transporter ATP-binding protein MTH_133 from Methanothermobacter thermautotrophicus (strain ATCC 29096 / DSM 1053 / JCM 10044 / NBRC 100330 / Delta H) (Methanobacterium thermoautotrophicum).